The chain runs to 867 residues: Protein melted homolog (867 aa).

The disordered stretch occupies residues 480–505 (MPSSSRTNVHLSQAASSSRGHSLPQT). The region spanning 753-860 (EKVLEGQLKE…WLHCLQIAMA (108 aa)) is the PH domain.

It belongs to the MELT/VEPH family.

Its subcellular location is the cell membrane. The chain is Protein melted homolog from Caenorhabditis briggsae.